The following is a 145-amino-acid chain: MAEVEQKKKRTFRKFTYRGVDLDQLLDMSYEQLMQLYSARQRRRLNRGLRRKQHSLLKRLRKAKKDAPPMEKPEVVKTHLRDMIILPEMVGSMVGVYNGKTFNQVEIKPEMIGHYLGEFSITYKPVKHGRPGIGATHSSRFIPLK.

The residue at position 2 (Ala-2) is an N-acetylalanine. A Glycyl lysine isopeptide (Lys-Gly) (interchain with G-Cter in SUMO2) cross-link involves residue Lys-108.

It belongs to the universal ribosomal protein uS19 family. Component of the small ribosomal subunit.

The protein resides in the cytoplasm. Its function is as follows. Component of the small ribosomal subunit. The ribosome is a large ribonucleoprotein complex responsible for the synthesis of proteins in the cell. The sequence is that of Small ribosomal subunit protein uS19 (RPS15) from Bos taurus (Bovine).